The primary structure comprises 209 residues: Small ribosomal subunit protein uS4 (209 aa).

The S4 RNA-binding domain occupies Thr99–Leu164.

Belongs to the universal ribosomal protein uS4 family. In terms of assembly, part of the 30S ribosomal subunit. Contacts protein S5. The interaction surface between S4 and S5 is involved in control of translational fidelity.

One of the primary rRNA binding proteins, it binds directly to 16S rRNA where it nucleates assembly of the body of the 30S subunit. Its function is as follows. With S5 and S12 plays an important role in translational accuracy. This is Small ribosomal subunit protein uS4 from Natranaerobius thermophilus (strain ATCC BAA-1301 / DSM 18059 / JW/NM-WN-LF).